A 427-amino-acid polypeptide reads, in one-letter code: Chaperone SurA (427 aa).

The signal sequence occupies residues 1 to 19; sequence MKIWKSILFTTLLSCGAVA. 2 PpiC domains span residues 170-268 and 277-377; these read TVQY…KIED and VTEV…EVLD.

Its subcellular location is the periplasm. It carries out the reaction [protein]-peptidylproline (omega=180) = [protein]-peptidylproline (omega=0). Chaperone involved in the correct folding and assembly of outer membrane proteins. Recognizes specific patterns of aromatic residues and the orientation of their side chains, which are found more frequently in integral outer membrane proteins. May act in both early periplasmic and late outer membrane-associated steps of protein maturation. In Vibrio parahaemolyticus serotype O3:K6 (strain RIMD 2210633), this protein is Chaperone SurA.